The primary structure comprises 484 residues: Putative cysteine ligase BshC (484 aa).

Positions 372–435 form a coiled coil; that stretch reads RAFRDRVEGL…AARDEVLARH (64 aa).

It belongs to the BshC family.

This is Putative cysteine ligase BshC from Thermus thermophilus (strain ATCC 27634 / DSM 579 / HB8).